A 79-amino-acid polypeptide reads, in one-letter code: Toxin 3FTx-Oxy5 (79 aa).

An N-terminal signal peptide occupies residues 1–23 (MKTLLLTLVVMTIVCLDLGYTLT). Cystine bridges form between C24/C41, C34/C59, C63/C71, and C72/C77.

The protein belongs to the three-finger toxin family. Short-chain subfamily. In terms of tissue distribution, expressed by the venom gland.

Its subcellular location is the secreted. The sequence is that of Toxin 3FTx-Oxy5 from Oxyuranus microlepidotus (Inland taipan).